A 1997-amino-acid chain; its full sequence is Protein MOR1 (1997 aa).

HEAT repeat units follow at residues 48-86 (DARLREFGPLFKKTVADSNAPVQEKALDALLAFQRAADA) and 164-202 (VVPPKKILKMLPELFDHPDQNVRASSKGLTLELCRWIGK). Residues 236–264 (RKIRSEQEKELEEEVVPEAAGTNNSEEAV) are disordered. 3 HEAT repeats span residues 321 to 359 (PGDFHEICRTLKKLITDVNLAVSVEATQAIGNLAKGLRT), 362 to 400 (SGNSRVLLPVLLEKLKEKKPTMTEALSQTLQAMHKSGCI), and 441 to 479 (LKLHKEYVPICMECLNDGTPEVRDASFSVLTAIAKMVGM). The tract at residues 501–576 (IGSASDTTSG…DGGPQSKASA (76 aa)) is disordered. Residues 504-520 (ASDTTSGTVAASNTGVG) show a composition bias toward polar residues. Residues 529-539 (SSSMRRSAASM) show a composition bias toward low complexity. 4 HEAT repeats span residues 848–886 (EDISAKITPTLLKNLGSPDWKLRLESIDAVSKIVEEAHK), 890–928 (PTGTVELFTALRARLYDSNKNLVMATLSTIGGLASAMGP), 931–969 (EKSSKGILADVLKCLGDNKKHMRECTLTALDLWVAAAQL), and 1007–1045 (PSEALPLLKPSASSLMDKSSEVRKAAESFMNEILKICGQ). The interval 1087 to 1115 (MSLPSKAGSKNNKHGPNDRGSNVSKAVSQ) is disordered. 4 HEAT repeats span residues 1233-1259 (TTCLLKVLDFLPELFDVLKDQSYMLTE), 1260-1294 (AEAAIFLPCLMEKSGHNIEKVREKMGELIKQMVNI), 1295-1332 (YSLPKLLPYILEGLRSKNNRTRIECVDIIGYFMDHHGT), and 1334-1372 (VSGLLKNLPSVAALTAERDGEIRKAALNTLATAYKNLGD). Residues 1400–1410 (MDKRREGRPGD) show a composition bias toward basic and acidic residues. The interval 1400-1436 (MDKRREGRPGDARAALRRSVRENGSDIAEQSGEAVSR) is disordered. The HEAT 14 repeat unit spans residues 1539–1579 (RSCKYVLNTLMQTFQIKRLAHAVKEGTLDNLITELLLWLLD). The tract at residues 1755 to 1776 (MGQTHWGDAGSNNPNPSTHSTD) is disordered. Positions 1764 to 1776 (GSNNPNPSTHSTD) are enriched in polar residues.

It belongs to the TOG/XMAP215 family.

It localises to the cytoplasm. The protein resides in the cytoskeleton. Microtubule-associated protein that is essential for cortical microtubules organization and function. The sequence is that of Protein MOR1 (MOR1) from Oryza sativa subsp. japonica (Rice).